Here is a 1040-residue protein sequence, read N- to C-terminus: Multidrug resistance protein MdtB (1040 aa).

A run of 11 helical transmembrane segments spans residues 15-37 (LFILRPVATTLLMIAILLAGIIG), 343-365 (VQFELLLAIALVVMVIYLFLRNA), 369-391 (LIPSIAVPLSLVGTFAAMYFLGF), 398-420 (LMALTIATGFVVDDAIVVIENIA), 440-462 (IGFTIISLTFSLIAVLIPLLFMG), 474-496 (VTLAVSILISAVVSLTLTPMMCA), 535-557 (HPWLTLSVALGTLLLTILLYIWI), 867-889 (VWLIVAAIVAMYIVLGVLYESFI), 909-931 (LMMAGKDLDVIAIIGIILLIGIV), 968-990 (ILMTTMAALLSALPLMLSTGVGA), and 1000-1022 (MVGGLIMSQILTLFTTPVIYLLF).

Belongs to the resistance-nodulation-cell division (RND) (TC 2.A.6) family. MdtB subfamily. As to quaternary structure, part of a tripartite efflux system composed of MdtA, MdtB and MdtC. MdtB forms a heteromultimer with MdtC.

The protein localises to the cell inner membrane. The polypeptide is Multidrug resistance protein MdtB (Pectobacterium atrosepticum (strain SCRI 1043 / ATCC BAA-672) (Erwinia carotovora subsp. atroseptica)).